The chain runs to 198 residues: Molybdenum cofactor guanylyltransferase (198 aa).

GTP is bound by residues 14-16, Lys27, Asp73, and Asp103; that span reads LAG. Asp103 serves as a coordination point for Mg(2+).

Belongs to the MobA family. As to quaternary structure, monomer. The cofactor is Mg(2+).

The protein localises to the cytoplasm. The catalysed reaction is Mo-molybdopterin + GTP + H(+) = Mo-molybdopterin guanine dinucleotide + diphosphate. Transfers a GMP moiety from GTP to Mo-molybdopterin (Mo-MPT) cofactor (Moco or molybdenum cofactor) to form Mo-molybdopterin guanine dinucleotide (Mo-MGD) cofactor. In Pseudomonas paraeruginosa (strain DSM 24068 / PA7) (Pseudomonas aeruginosa (strain PA7)), this protein is Molybdenum cofactor guanylyltransferase.